Reading from the N-terminus, the 182-residue chain is uncharacterized protein (182 aa).

It belongs to the DNA 3' phosphatase family.

This is an uncharacterized protein from Autographa californica nuclear polyhedrosis virus (AcMNPV).